Reading from the N-terminus, the 551-residue chain is Harmonin (551 aa).

The N-terminal domain stretch occupies residues 1–86; sequence MDRKVAREFR…LTPRRSRKLK (86 aa). PDZ domains lie at 87 to 169 and 211 to 293; these read EVRL…HIGL and KVFI…AGAG. Positions 194 to 532 are mediates interaction with MYO7B; sequence GGRSSLGSPG…QKAWNQGDWI (339 aa). S219 bears the Phosphoserine mark. The stretch at 318–377 forms a coiled coil; the sequence is LMQKRLAMESNKILQEQQEMERQRKKEIAQKAAEENERYRKEMEQIVEEEEKFRKQWEED. The tract at residues 401-425 is disordered; it reads KPKYDLGVDPEFDPADDLDGGTNKR. Residues 408 to 419 are compositionally biased toward acidic residues; sequence VDPEFDPADDLD. Positions 452 to 536 constitute a PDZ 3 domain; that stretch reads DVRLLRVKKE…NQGDWIDLVV (85 aa).

Part of the IMAC/intermicrovillar adhesion complex/intermicrovillar tip-link complex composed of ANKS4B, MYO7B, USH1C, CDHR2 and CDHR5. Part of a complex composed of USH1C, USH1G and MYO7A. Interacts with F-actin. Interacts with USH2A. Interacts with SLC4A7. Interacts (via PDZ1 domain) with the C-terminus of USHBP1. Interacts (via N-terminus and PDZ 2 domain) with CDH23. Interacts with USH1G. Interacts with MYO7B. Interacts with CDHR2 and CDHR5; may mediate their interaction with MYO7B at the microvilli tip. Interacts (via PDZ 1 domain) with ANKS4B. Interacts (via PDZ 1 domain) with DOCK4.

Its subcellular location is the cytoplasm. It is found in the cytosol. The protein resides in the cytoskeleton. It localises to the cell projection. The protein localises to the microvillus. Anchoring/scaffolding protein that is a part of the functional network formed by USH1C, USH1G, CDH23 and MYO7A that mediates mechanotransduction in cochlear hair cells. Required for normal development and maintenance of cochlear hair cell bundles. As part of the intermicrovillar adhesion complex/IMAC plays a role in brush border differentiation, controlling microvilli organization and length. Probably plays a central regulatory role in the assembly of the complex, recruiting CDHR2, CDHR5 and MYO7B to the microvilli tips. The polypeptide is Harmonin (USH1C) (Bos taurus (Bovine)).